The following is a 132-amino-acid chain: Large ribosomal subunit protein uL14 (132 aa).

It belongs to the universal ribosomal protein uL14 family. In terms of assembly, part of the 50S ribosomal subunit. Forms a cluster with proteins L3 and L24e, part of which may contact the 16S rRNA in 2 intersubunit bridges.

In terms of biological role, binds to 23S rRNA. Forms part of two intersubunit bridges in the 70S ribosome. The chain is Large ribosomal subunit protein uL14 from Methanocaldococcus jannaschii (strain ATCC 43067 / DSM 2661 / JAL-1 / JCM 10045 / NBRC 100440) (Methanococcus jannaschii).